Consider the following 154-residue polypeptide: Myoglobin (154 aa).

The 147-residue stretch at 2 to 148 (GLSDGEWQLV…FRNDMAAKYK (147 aa)) folds into the Globin domain. Phosphoserine is present on S4. H65 contacts nitrite. Position 65 (H65) interacts with O2. Position 68 is a phosphothreonine (T68). H94 serves as a coordination point for heme b.

This sequence belongs to the globin family. Monomeric.

The protein resides in the cytoplasm. It is found in the sarcoplasm. It carries out the reaction Fe(III)-heme b-[protein] + nitric oxide + H2O = Fe(II)-heme b-[protein] + nitrite + 2 H(+). The catalysed reaction is H2O2 + AH2 = A + 2 H2O. In terms of biological role, monomeric heme protein which primary function is to store oxygen and facilitate its diffusion within muscle tissues. Reversibly binds oxygen through a pentacoordinated heme iron and enables its timely and efficient release as needed during periods of heightened demand. Depending on the oxidative conditions of tissues and cells, and in addition to its ability to bind oxygen, it also has a nitrite reductase activity whereby it regulates the production of bioactive nitric oxide. Under stress conditions, like hypoxia and anoxia, it also protects cells against reactive oxygen species thanks to its pseudoperoxidase activity. The sequence is that of Myoglobin (MB) from Macaca fascicularis (Crab-eating macaque).